Consider the following 241-residue polypeptide: Cytochrome b6-f complex iron-sulfur subunit 2, cyanelle (241 aa).

The N-terminal 62 residues, 1-62 (MSAFACSAVA…AAKATTFSIS (62 aa)), are a transit peptide targeting the cyanelle. The helical transmembrane segment at 83-103 (LLGAIAGPTIGAGGPFVSFLV) threads the bilayer. Positions 127 to 223 (VEKWLETXKP…VNVLEDGVVA (97 aa)) constitute a Rieske domain. [2Fe-2S] cluster-binding residues include Cys169, His171, Cys187, and His190. Cys174 and Cys189 are oxidised to a cystine.

The protein belongs to the Rieske iron-sulfur protein family. In terms of assembly, the 4 large subunits of the cytochrome b6-f complex are cytochrome b6, subunit IV (17 kDa polypeptide, petD), cytochrome f and the Rieske protein, while the 4 small subunits are petG, petL, petM and petN. The complex functions as a dimer. It depends on [2Fe-2S] cluster as a cofactor.

It localises to the plastid. It is found in the cyanelle thylakoid membrane. It catalyses the reaction 2 oxidized [plastocyanin] + a plastoquinol + 2 H(+)(in) = 2 reduced [plastocyanin] + a plastoquinone + 4 H(+)(out). In terms of biological role, component of the cytochrome b6-f complex, which mediates electron transfer between photosystem II (PSII) and photosystem I (PSI), cyclic electron flow around PSI, and state transitions. This chain is Cytochrome b6-f complex iron-sulfur subunit 2, cyanelle (petC-2), found in Cyanophora paradoxa.